Here is a 539-residue protein sequence, read N- to C-terminus: MAKDLKFSEDARQAMLRGVDKLANAVKVTIGPKGRNVVLDKEYVAPLITNDGVTIAKEIELEDPYENMGAKLVQEVANKTNEIAGDGTTTATVLAQAMIQEGLKNVTSGANPVGLREGIDKAVRVAVQALHDISQKVENKNEIAQVGAISAADEEIGKYISEAMDKVGNDGVITIEESNGLDTELEVVEGMQFDRGYQSPYMVTDSDKMIAELERPYILVTDKKISSFQDILPLLEQVVQSSRPILIVADEVEGDALTNIVLNRMRGTFTAVAVKAPGFGDRRKAMLEDLAILTGATVITDDLGLELKDASIDMLGSANKVEVTKDNTTVVDGDGDDNSIDARVSQIKAQIEETDSDFDREKLQERLAKLAGGVAVIKVGAASETELKERKLRIEDALNSTRAAVEEGIVAGGGTALVNIYNKVDEIEAEGDVATGVNIVLKALSAPVRQIAENAGLEGSVIVERLKHADAGVGFNAATNEWVNMLEEGIVDPTKVTRSALQHAASVAAMFLTTEAVVATIPEPDNNDNPGMGGMPGMM.

Residues 29-32 (TIGP), 86-90 (DGTTT), G413, 476-478 (NAA), and D492 each bind ATP.

Belongs to the chaperonin (HSP60) family. Forms a cylinder of 14 subunits composed of two heptameric rings stacked back-to-back. Interacts with the co-chaperonin GroES.

Its subcellular location is the cytoplasm. It carries out the reaction ATP + H2O + a folded polypeptide = ADP + phosphate + an unfolded polypeptide.. Its function is as follows. Together with its co-chaperonin GroES, plays an essential role in assisting protein folding. The GroEL-GroES system forms a nano-cage that allows encapsulation of the non-native substrate proteins and provides a physical environment optimized to promote and accelerate protein folding. The sequence is that of Chaperonin GroEL from Staphylococcus haemolyticus (strain JCSC1435).